The chain runs to 158 residues: NKG2-F type II integral membrane protein (158 aa).

A compositionally biased stretch (polar residues) spans 1–12; that stretch reads MNKQRGTYSEVS. The disordered stretch occupies residues 1–25; sequence MNKQRGTYSEVSLAQDPKRQQRKLK. At 1–74 the chain is on the cytoplasmic side; it reads MNKQRGTYSE…LPPPEKLTAE (74 aa). Residues 75–95 form a helical; Signal-anchor for type II membrane protein membrane-spanning segment; sequence VLGIICIVLMATVLKTIVLIP. Residues 96-158 lie on the Extracellular side of the membrane; that stretch reads CIGVLEQNNF…VLRRTLICFL (63 aa).

In terms of assembly, can form disulfide-bonded heterodimer with CD94. As to expression, natural killer cells.

It localises to the membrane. Its function is as follows. May play a role as a receptor for the recognition of MHC class I HLA-E molecules by NK cells. In Homo sapiens (Human), this protein is NKG2-F type II integral membrane protein (KLRC4).